Consider the following 391-residue polypeptide: MMSCNYSFSSISPSSKSAFTSPSNFNLNPRLICCSAGGTVAEPKAINATQPLLLDAVRGKEVERPPVWLMRQAGRYMKSYQLLCEKYPLFRDRSENVDLVVEISLQPWKVFRPDGVILFSDILTPLSGMNIPFDIIKGKGPVIFDPLRTAADVEKVREFIPEKSVPYVGEALTILRKEVNNQAAVLGFVGAPFTLASYVVEGGSSKNFTKIKRLAFAEPKVLHALLQKFATSMAKYIRYQADSGAQAVQIFDSWATELSPVDFEEFSLPYLKQIVDSVKLTHPNLPLILYASGSGGLLERLPLTGVDVVSLDWTVDMADGRRRLGPNVAIQGNVDPGVLFGSKEFITNRINDTVKKAGKGKHILNLGHGIKVGTPEENFAHFFEIAKGLRY.

Substrate is bound by residues R71 to R75, F90, S120, D121, Y198, S253, and H368.

It belongs to the uroporphyrinogen decarboxylase family. In terms of assembly, homodimer.

It localises to the plastid. It is found in the chloroplast. The catalysed reaction is uroporphyrinogen III + 4 H(+) = coproporphyrinogen III + 4 CO2. Its pathway is porphyrin-containing compound metabolism; protoporphyrin-IX biosynthesis; coproporphyrinogen-III from 5-aminolevulinate: step 4/4. Its function is as follows. Catalyzes the decarboxylation of four acetate groups of uroporphyrinogen-III to yield coproporphyrinogen-III. The chain is Uroporphyrinogen decarboxylase, chloroplastic (DCUP) from Nicotiana tabacum (Common tobacco).